A 590-amino-acid polypeptide reads, in one-letter code: Fucose-1-phosphate guanylyltransferase (590 aa).

Expressed at highest levels in brain, moderately in testis, ovary and kidney, and weakly in liver, spleen, heart and lung.

The protein resides in the cytoplasm. It carries out the reaction beta-L-fucose 1-phosphate + GTP + H(+) = GDP-beta-L-fucose + diphosphate. In terms of biological role, catalyzes the formation of GDP-L-fucose from GTP and L-fucose-1-phosphate. Functions as a salvage pathway to reutilize L-fucose arising from the turnover of glycoproteins and glycolipids. The chain is Fucose-1-phosphate guanylyltransferase from Mus musculus (Mouse).